The chain runs to 790 residues: Protein sel-1 homolog 1 (790 aa).

The signal sequence occupies residues 1 to 21 (MQVRVRLSLLLLCAVLLGSAA). Residues 22–51 (ATSDDKTNQDDSLDSKSSLPTDESVKDHTT) are disordered. Topologically, residues 22–734 (ATSDDKTNQD…LFTQLDMDQL (713 aa)) are lumenal. Residues 23-733 (TSDDKTNQDD…DLFTQLDMDQ (711 aa)) form an interaction with ERLEC1, OS9 and SYVN1 region. At Ser-64 the chain carries Phosphoserine. A compositionally biased stretch (acidic residues) spans 67–78 (AEVESLLQDEED). The disordered stretch occupies residues 67 to 98 (AEVESLLQDEEDSSKTQEEEISFLESPNPSSK). A Fibronectin type-II domain is found at 118–166 (AHGEPCHFPFLFLDKEYDECTSDGREDGRLWCATTYDYKTDEKWGFCET). 2 cysteine pairs are disulfide-bonded: Cys-123/Cys-149 and Cys-137/Cys-164. 9 Sel1-like repeats span residues 179–214 (AEMI…GMNH), 215–250 (TKAL…EEGS), 251–286 (PKGQ…LGGN), 287–322 (LIAH…NHVA), 369–405 (VQAQ…NAGN), 406–442 (SHAM…DMGN), 443–478 (PVGQ…EQGW), 479–514 (VDGQ…QGGH), and 515–550 (ILAF…ERGR). N-linked (GlcNAc...) asparagine glycosylation is found at Asn-191 and Asn-213. An N-linked (GlcNAc...) asparagine glycan is attached at Asn-268. An important for homodimerization and oligomerization region spans residues 348–533 (NSGMLEEDLI…MHASGTGVMR (186 aa)). Asn-427 is a glycosylation site (N-linked (GlcNAc...) asparagine). Asn-604 is a glycosylation site (N-linked (GlcNAc...) asparagine). Sel1-like repeat units lie at residues 623–658 (TVAR…EQQH) and 660–695 (AQAM…EASP). The segment at 639–719 (TDVDYETAFI…VVYFLQYIRE (81 aa)) is interaction with SYVN1. The segment at 734 to 790 (LLGPEWDLYLMTIIALLLGTVIAYRQRQHQDIPVPRPPGPRPAPPQQEGPPEQQPPQ) is mediates retention in the endoplasmic reticulum. The chain crosses the membrane as a helical span at residues 735–755 (LGPEWDLYLMTIIALLLGTVI). Topologically, residues 756 to 790 (AYRQRQHQDIPVPRPPGPRPAPPQQEGPPEQQPPQ) are cytoplasmic. Residues 763-790 (QDIPVPRPPGPRPAPPQQEGPPEQQPPQ) form a disordered region. Residues 767-790 (VPRPPGPRPAPPQQEGPPEQQPPQ) show a composition bias toward pro residues.

This sequence belongs to the sel-1 family. Homodimer and homooligomer. May form a complex with ERLEC1, HSPA5, OS9, and SYVN1. Interacts with FOXRED2 and EDEM1. Interacts with LPL and LMF1; may stabilize the complex formed by LPL and LMF1 and thereby promote the export of LPL dimers. Component of the HRD1 complex, which comprises at least SYNV1/HRD1, DERL1/2, FAM8A1, HERPUD1/HERP, OS9, SEL1L and UBE2J1. SYNV1 assembles with SEL1L and FAM8A1 through its transmembrane domains, but interaction with its cytoplasmic domain is required to confer stability to FAM8A1 and enhance recruitment of HERPUD1. The interaction with SYNV1/HRD1 is direct. In terms of processing, N-glycosylated. In terms of tissue distribution, highly expressed in pancreas, white adipose tissue, liver and spleen (at protein level). Detected in heart, brain, spleen, lung, liver, kidney and testis.

The protein localises to the endoplasmic reticulum membrane. Its function is as follows. Plays a role in the endoplasmic reticulum quality control (ERQC) system also called ER-associated degradation (ERAD) involved in ubiquitin-dependent degradation of misfolded endoplasmic reticulum proteins. Enhances SYVN1 stability. Plays a role in LPL maturation and secretion. Required for normal differentiation of the pancreas epithelium, and for normal exocrine function and survival of pancreatic cells. May play a role in Notch signaling. In Mus musculus (Mouse), this protein is Protein sel-1 homolog 1 (Sel1l).